A 110-amino-acid polypeptide reads, in one-letter code: Pathogenesis-related protein (110 aa).

An N-terminal signal peptide occupies residues A1–A19.

This sequence belongs to the thaumatin family.

The sequence is that of Pathogenesis-related protein from Juniperus virginiana (Eastern redcedar).